The following is a 180-amino-acid chain: Secreted RxLR effector protein 5 (180 aa).

An N-terminal signal peptide occupies residues 1 to 24 (MRFYYTLLATAAALLVHSDALSAA). The RxLR-dEER motif lies at 44 to 60 (RFLRRHTDSETTDNEER).

It belongs to the RxLR effector family.

The protein resides in the secreted. It is found in the host cell. Secreted effector that partially suppresses elicitor-induced cell death in host and enhances virulence of P.parasitica. This Phytophthora nicotianae (Potato buckeye rot agent) protein is Secreted RxLR effector protein 5.